Consider the following 362-residue polypeptide: Malate dehydrogenase (362 aa).

Belongs to the LDH2/MDH2 oxidoreductase family. In terms of assembly, homodimer.

It is found in the cytoplasm. The catalysed reaction is (S)-malate + NAD(+) = oxaloacetate + NADH + H(+). The protein is Malate dehydrogenase (mdh) of Pyrococcus abyssi (strain GE5 / Orsay).